Here is a 198-residue protein sequence, read N- to C-terminus: ATP-dependent Clp protease proteolytic subunit 1 (198 aa).

Ser98 functions as the Nucleophile in the catalytic mechanism. His123 is a catalytic residue.

It belongs to the peptidase S14 family. As to quaternary structure, fourteen ClpP subunits assemble into 2 heptameric rings which stack back to back to give a disk-like structure with a central cavity, resembling the structure of eukaryotic proteasomes.

It localises to the cytoplasm. The catalysed reaction is Hydrolysis of proteins to small peptides in the presence of ATP and magnesium. alpha-casein is the usual test substrate. In the absence of ATP, only oligopeptides shorter than five residues are hydrolyzed (such as succinyl-Leu-Tyr-|-NHMec, and Leu-Tyr-Leu-|-Tyr-Trp, in which cleavage of the -Tyr-|-Leu- and -Tyr-|-Trp bonds also occurs).. Cleaves peptides in various proteins in a process that requires ATP hydrolysis. Has a chymotrypsin-like activity. Plays a major role in the degradation of misfolded proteins. ClpXP1 is involved in the complete degradation of the Site-2 clipped anti-sigma-W factor RsiW. This results in the release of SigW and the transcription activation of the genes under the control of the sigma-W factor. The polypeptide is ATP-dependent Clp protease proteolytic subunit 1 (Bacillus licheniformis (strain ATCC 14580 / DSM 13 / JCM 2505 / CCUG 7422 / NBRC 12200 / NCIMB 9375 / NCTC 10341 / NRRL NRS-1264 / Gibson 46)).